The sequence spans 353 residues: UDP-N-acetylenolpyruvoylglucosamine reductase (353 aa).

The FAD-binding PCMH-type domain occupies 31-201 (LASHAPAFVA…GSVRFALPRP (171 aa)). Residue Arg-177 is part of the active site. Ser-250 (proton donor) is an active-site residue. Residue Glu-346 is part of the active site.

It belongs to the MurB family. Requires FAD as cofactor.

It localises to the cytoplasm. The enzyme catalyses UDP-N-acetyl-alpha-D-muramate + NADP(+) = UDP-N-acetyl-3-O-(1-carboxyvinyl)-alpha-D-glucosamine + NADPH + H(+). Its pathway is cell wall biogenesis; peptidoglycan biosynthesis. In terms of biological role, cell wall formation. This is UDP-N-acetylenolpyruvoylglucosamine reductase from Bordetella parapertussis (strain 12822 / ATCC BAA-587 / NCTC 13253).